The chain runs to 604 residues: Kelch-like protein 15 (604 aa).

The 68-residue stretch at 31–98 folds into the BTB domain; that stretch reads LDVTLVIEDH…MYYGTIELSM (68 aa). One can recognise a BACK domain in the interval 133-237; it reads CAEIMRLLDD…TPTSVFEKVK (105 aa). Kelch repeat units follow at residues 328-379, 381-426, 428-473, 489-542, and 544-590; these read FVFL…VIGK, IYAV…VLNN, LFIT…NKSK, KLYV…VLDK, and IMVL…VCNL.

Homodimer. Dimerization does not affect PPP2R5B-binding, but is required for its proteasomal degradation. Interacts with CUL3. Directly interacts with PPP2R5B; this interaction leads to PPP2R5B proteasomal degradation. Interacts with RBBP8/CtIP; this interaction leads to RBBP8 proteasomal degradation. Interacts with PACMP micropeptide; interaction prevents ubiquitination and degradation of RBBP8/CtIP.

The protein resides in the nucleus. It functions in the pathway protein modification; protein ubiquitination. Its function is as follows. Substrate-specific adapter for CUL3 E3 ubiquitin-protein ligase complex. Acts as an adapter for CUL3 to target the serine/threonine-protein phosphatase 2A (PP2A) subunit PPP2R5B for ubiquitination and subsequent proteasomal degradation, thus promoting exchange with other regulatory subunits. Acts as an adapter for CUL3 to target the DNA-end resection factor RBBP8/CtIP for ubiquitination and subsequent proteasomal degradation. Through the regulation of RBBP8/CtIP protein turnover, plays a key role in DNA damage response, favoring DNA double-strand repair through error-prone non-homologous end joining (NHEJ) over error-free, RBBP8-mediated homologous recombination (HR). The protein is Kelch-like protein 15 (KLHL15) of Homo sapiens (Human).